We begin with the raw amino-acid sequence, 367 residues long: Female-specific protein transformer (367 aa).

The tract at residues E86–S280 is disordered. A compositionally biased stretch (polar residues) spans V109 to N129. Residues P130–H144 are compositionally biased toward basic and acidic residues. The span at N195–S223 shows a compositional bias: basic residues. Basic and acidic residues predominate over residues T229 to R238. Residues T239 to S257 are compositionally biased toward basic residues.

Its function is as follows. Sex differentiation protein controlling female somatic sexual differentiation. May act by promoting the formation of a splicing enhancer complex. This Musca domestica (House fly) protein is Female-specific protein transformer.